The primary structure comprises 483 residues: Kynureninase 1 (483 aa).

Residues leucine 147, threonine 148, 175-178, serine 232, aspartate 261, histidine 264, and tyrosine 286 each bind pyridoxal 5'-phosphate; that span reads FPSD. Position 287 is an N6-(pyridoxal phosphate)lysine (lysine 287). Tryptophan 326 and asparagine 354 together coordinate pyridoxal 5'-phosphate.

The protein belongs to the kynureninase family. Homodimer. It depends on pyridoxal 5'-phosphate as a cofactor.

The protein localises to the cytoplasm. It catalyses the reaction L-kynurenine + H2O = anthranilate + L-alanine + H(+). The catalysed reaction is 3-hydroxy-L-kynurenine + H2O = 3-hydroxyanthranilate + L-alanine + H(+). It functions in the pathway amino-acid degradation; L-kynurenine degradation; L-alanine and anthranilate from L-kynurenine: step 1/1. Its pathway is cofactor biosynthesis; NAD(+) biosynthesis; quinolinate from L-kynurenine: step 2/3. Its function is as follows. Catalyzes the cleavage of L-kynurenine (L-Kyn) and L-3-hydroxykynurenine (L-3OHKyn) into anthranilic acid (AA) and 3-hydroxyanthranilic acid (3-OHAA), respectively. In Aspergillus terreus (strain NIH 2624 / FGSC A1156), this protein is Kynureninase 1 (bna5-1).